The sequence spans 349 residues: Protein RecA (349 aa).

An ATP-binding site is contributed by 67 to 74 (GPESSGKT).

Belongs to the RecA family.

It is found in the cytoplasm. Its function is as follows. Can catalyze the hydrolysis of ATP in the presence of single-stranded DNA, the ATP-dependent uptake of single-stranded DNA by duplex DNA, and the ATP-dependent hybridization of homologous single-stranded DNAs. It interacts with LexA causing its activation and leading to its autocatalytic cleavage. This chain is Protein RecA, found in Chlamydia abortus (strain DSM 27085 / S26/3) (Chlamydophila abortus).